A 208-amino-acid polypeptide reads, in one-letter code: MKLVEVKHPLVKHKLGVMREAEIDTKKFRELATEIGSLLTYEATSDLETEKVTINSWNGPVEIDRIKGKKVTVVPILRAGLGMMDGVLEHVPSARISVVGIYRNEETLKPVPYFQKLASDLEERLAIVVDPMLATGGSMIATLDLLKAKGCKHIKVLVLVAAPEGIKALEAAHPDIELYCASIDSHLNEQGYIIPGLGDAGDKIFGTK.

Residues arginine 78, arginine 103, and 130–138 (DPMLATGGS) contribute to the 5-phospho-alpha-D-ribose 1-diphosphate site. Uracil-binding positions include isoleucine 193 and 198-200 (GDA). Aspartate 199 provides a ligand contact to 5-phospho-alpha-D-ribose 1-diphosphate.

This sequence belongs to the UPRTase family. The cofactor is Mg(2+).

The catalysed reaction is UMP + diphosphate = 5-phospho-alpha-D-ribose 1-diphosphate + uracil. The protein operates within pyrimidine metabolism; UMP biosynthesis via salvage pathway; UMP from uracil: step 1/1. With respect to regulation, allosterically activated by GTP. Functionally, catalyzes the conversion of uracil and 5-phospho-alpha-D-ribose 1-diphosphate (PRPP) to UMP and diphosphate. The protein is Uracil phosphoribosyltransferase of Haemophilus influenzae (strain 86-028NP).